A 213-amino-acid polypeptide reads, in one-letter code: Kynurenine formamidase (213 aa).

Residue tryptophan 15 participates in substrate binding. Residues histidine 45, histidine 49, and aspartate 51 each coordinate Zn(2+). Histidine 55 (proton donor/acceptor) is an active-site residue. Zn(2+) contacts are provided by histidine 157 and glutamate 169.

This sequence belongs to the Cyclase 1 superfamily. KynB family. Homodimer. The cofactor is Zn(2+).

It catalyses the reaction N-formyl-L-kynurenine + H2O = L-kynurenine + formate + H(+). Its pathway is amino-acid degradation; L-tryptophan degradation via kynurenine pathway; L-kynurenine from L-tryptophan: step 2/2. In terms of biological role, catalyzes the hydrolysis of N-formyl-L-kynurenine to L-kynurenine, the second step in the kynurenine pathway of tryptophan degradation. This Deinococcus geothermalis (strain DSM 11300 / CIP 105573 / AG-3a) protein is Kynurenine formamidase.